Consider the following 95-residue polypeptide: Large ribosomal subunit protein uL23 (95 aa).

Belongs to the universal ribosomal protein uL23 family. In terms of assembly, part of the 50S ribosomal subunit. Contacts protein L29 and trigger factor when it is bound to the ribosome.

Its function is as follows. One of the early assembly protein it binds 23S rRNA. One of the proteins that surrounds the polypeptide exit tunnel on the outside of the subunit. Forms the main docking site for trigger factor binding to the ribosome. In Deinococcus radiodurans (strain ATCC 13939 / DSM 20539 / JCM 16871 / CCUG 27074 / LMG 4051 / NBRC 15346 / NCIMB 9279 / VKM B-1422 / R1), this protein is Large ribosomal subunit protein uL23.